Here is an 805-residue protein sequence, read N- to C-terminus: Leucine--tRNA ligase (805 aa).

The 'HIGH' region motif lies at 40–51 (PYPSGQGLHVGH). Residues 576–580 (KMSKS) carry the 'KMSKS' region motif. Position 579 (lysine 579) interacts with ATP.

It belongs to the class-I aminoacyl-tRNA synthetase family.

The protein resides in the cytoplasm. The catalysed reaction is tRNA(Leu) + L-leucine + ATP = L-leucyl-tRNA(Leu) + AMP + diphosphate. This is Leucine--tRNA ligase from Ligilactobacillus salivarius (strain UCC118) (Lactobacillus salivarius).